The following is a 391-amino-acid chain: Squalene synthase 8 (391 aa).

The protein belongs to the phytoene/squalene synthase family. The cofactor is Mg(2+). Requires Mn(2+) as cofactor.

It is found in the endoplasmic reticulum. It carries out the reaction 2 (2E,6E)-farnesyl diphosphate + NADH + H(+) = squalene + 2 diphosphate + NAD(+). The catalysed reaction is 2 (2E,6E)-farnesyl diphosphate + NADPH + H(+) = squalene + 2 diphosphate + NADP(+). Its pathway is terpene metabolism; lanosterol biosynthesis; lanosterol from farnesyl diphosphate: step 1/3. In terms of biological role, component of the triterpene saponins (e.g. ginsenosides or panaxosides) and phytosterols biosynthetic pathways. Catalyzes the biosynthesis of squalene. This is Squalene synthase 8 from Panax ginseng (Korean ginseng).